The sequence spans 948 residues: Translation initiation factor IF-2 (948 aa).

Disordered stretches follow at residues 61–120 (IQAN…PALI), 162–243 (KSRE…TQSA), and 255–285 (QEKD…SHKI). Positions 68–78 (KNPEQDNKDDL) are enriched in basic and acidic residues. Residues 173-189 (SNTNNANSTNNANNVNN) show a composition bias toward low complexity. Over residues 190–207 (AKKEISEVKKQEQEIKRH) the composition is skewed to basic and acidic residues. The span at 208–219 (ENIKRRTGFRVI) shows a compositional bias: basic residues. Positions 230-243 (ENSVAESKKPTQSA) are enriched in polar residues. One can recognise a tr-type G domain in the interval 447-616 (ERPPVVTIMG…LIQADIMELK (170 aa)). Residues 456 to 463 (GHVDHGKT) are G1. 456–463 (GHVDHGKT) contacts GTP. The segment at 481-485 (GITQH) is G2. Residues 502–505 (DTPG) form a G3 region. Residues 502–506 (DTPGH) and 556–559 (NKMD) each bind GTP. Residues 556-559 (NKMD) are G4. The tract at residues 592–594 (SAK) is G5.

Belongs to the TRAFAC class translation factor GTPase superfamily. Classic translation factor GTPase family. IF-2 subfamily.

The protein localises to the cytoplasm. One of the essential components for the initiation of protein synthesis. Protects formylmethionyl-tRNA from spontaneous hydrolysis and promotes its binding to the 30S ribosomal subunits. Also involved in the hydrolysis of GTP during the formation of the 70S ribosomal complex. This is Translation initiation factor IF-2 from Helicobacter pylori (strain Shi470).